Here is a 417-residue protein sequence, read N- to C-terminus: NADH-quinone oxidoreductase subunit D (417 aa).

Belongs to the complex I 49 kDa subunit family. As to quaternary structure, NDH-1 is composed of 14 different subunits. Subunits NuoB, C, D, E, F, and G constitute the peripheral sector of the complex.

It localises to the cell inner membrane. It carries out the reaction a quinone + NADH + 5 H(+)(in) = a quinol + NAD(+) + 4 H(+)(out). Functionally, NDH-1 shuttles electrons from NADH, via FMN and iron-sulfur (Fe-S) centers, to quinones in the respiratory chain. The immediate electron acceptor for the enzyme in this species is believed to be ubiquinone. Couples the redox reaction to proton translocation (for every two electrons transferred, four hydrogen ions are translocated across the cytoplasmic membrane), and thus conserves the redox energy in a proton gradient. In Methylibium petroleiphilum (strain ATCC BAA-1232 / LMG 22953 / PM1), this protein is NADH-quinone oxidoreductase subunit D.